The sequence spans 308 residues: Spermidine synthase 1 (308 aa).

The region spanning 17-254 is the PABS domain; it reads PGWFSEISPL…GVIGFMLCST (238 aa). Glutamine 48 lines the S-adenosyl 3-(methylsulfanyl)propylamine pocket. A putrescine-binding site is contributed by tyrosine 78. S-adenosyl 3-(methylsulfanyl)propylamine is bound by residues glutamine 79, aspartate 103, glutamate 123, 154-155, and aspartate 173; that span reads DG. Aspartate 173 serves as the catalytic Proton acceptor. Putrescine is bound by residues 173-176 and tyrosine 242; that span reads DSSD.

This sequence belongs to the spermidine/spermine synthase family.

The catalysed reaction is S-adenosyl 3-(methylsulfanyl)propylamine + putrescine = S-methyl-5'-thioadenosine + spermidine + H(+). It functions in the pathway amine and polyamine biosynthesis; spermidine biosynthesis; spermidine from putrescine: step 1/1. This Datura stramonium (Jimsonweed) protein is Spermidine synthase 1.